Reading from the N-terminus, the 247-residue chain is MAGHSKWSQIKRTKAVVDAKRGAVFTRLGREIMVAARAGADPAGNFQLRTAISKARAAGVPASNIERAIAKGSGQAGDGAQLEDVRYEGYGPGGMAVLVEALTDNRNRTAADLRLAFSKNGGNLGENGCVAYLFEHRSEVILNAGPDDEERLLESLLELDADGYELLDGAVVVHGPFEALESLQDGLRHADWNVREWGHHWSAQTSVSVNDPETARSCLKLLDALDGLDDVRSVSANLDLADELEID.

It belongs to the TACO1 family.

It localises to the cytoplasm. The chain is Probable transcriptional regulatory protein Syncc9605_2132 from Synechococcus sp. (strain CC9605).